The chain runs to 722 residues: D-(-)-3-hydroxybutyrate oligomer hydrolase (722 aa).

An N-terminal signal peptide occupies residues 1 to 25 (MKTMQGKGSGRRLRGALLVTMAASG). S319 serves as the catalytic Charge relay system.

The protein belongs to the D-(-)-3-hydroxybutyrate oligomer hydrolase family.

It is found in the secreted. The enzyme catalyses (3R)-hydroxybutanoate dimer + H2O = 2 (R)-3-hydroxybutanoate + H(+). It functions in the pathway lipid metabolism; butanoate metabolism. With respect to regulation, inhibited by diisopropylfluorophosphate (DFP). In terms of biological role, participates in the degradation of poly-3-hydroxybutyrate (PHB). It works downstream of poly(3-hydroxybutyrate) depolymerase, hydrolyzing D(-)-3-hydroxybutyrate oligomers of various length (3HB-oligomers) into 3HB-monomers. The chain is D-(-)-3-hydroxybutyrate oligomer hydrolase from Ralstonia pickettii (Burkholderia pickettii).